A 245-amino-acid chain; its full sequence is Lytic switch protein BZLF1 (245 aa).

Residues methionine 1 to serine 167 are transactivation. Phosphothreonine is present on residues threonine 14 and threonine 159. Residues glutamine 140–serine 167 form a disordered region. A Bipartite nuclear localization signal motif is present at residues arginine 157–lysine 194. 3 positions are modified to phosphoserine: serine 167, serine 173, and serine 186. The tract at residues lysine 178–histidine 195 is basic motif. The region spanning lysine 178 to aspartate 228 is the bZIP domain. A leucine-zipper region spans residues leucine 196 to aspartate 228. Residues serine 229–phenylalanine 245 are accessory activation domain.

It belongs to the bZIP family. In terms of assembly, homodimer. Interacts (via b-ZIP domain) with the DNA polymerase processivity factor BMRF1 (via N-terminus); this interaction may inhibit BZLF1-induced transcription of the BMRF1 promoter. Interacts with human UBN1, CRTC2 and RACK1. Interacts (via N-terminus) with human PAX5 (via N-terminus); this interaction inhibits BZLF1-mediated lytic viral reactivation. Interacts (via leucine-zipper domain) with host CEBPA; this interaction induces G1 host cell cycle arrest. Interacts (via C-terminus) with host TP53BP1 (via C-terminus); this interaction is involved in the activation of the viral lytic cycle. Interacts with host chromatin-remodeling ATPase INO80; this interaction participates to the activation of early lytic viral genes by BZLF1. Interacts with host regulator of chromatin SMARCA5/hSNF2H; this interaction participates to the activation of early lytic viral genes by BZLF1. Interacts with host PLSCR1/Phospholipid scramblase 1; this interaction negatively regulates the transcriptional regulatory activity of BZLF1 by preventing the formation of the BZLF1-CBP complex.

It is found in the host nucleus. Functionally, transcription factor that acts as a molecular switch to induce the transition from the latent to the lytic or productive phase of the virus cycle. Mediates the switch from the latent to the lytic cycle of infection in cells containing a highly methylated viral genome. Probably binds to silenced chromatin and recruits host chromatin-remodeling enzymes. Regulates this switch by binding to 2 types of ZEBRA response elements (ZREs): the CpG-free AP-1 like elements (latency) and the methylated CpG-containing elements (lytic replication). Activates preferentially the methylated forms of the viral lytic R (BRLF1) and Na (BRRF1) gene promoters, the latters being the first genes activated during Z-mediated reactivation in latently infected cells. BZLF1 and BRLF1 act together to trigger lytic replication. Also binds the lytic origin of replication, oriLyt. Induces G1 cell cycle arrest by stabilizing the host CCAAT/enhancer binding protein CEBPA. This function is important because the lytic cycle preferentially takes place in host cells arrested in G1. The sequence is that of Lytic switch protein BZLF1 from Epstein-Barr virus (strain AG876) (HHV-4).